Consider the following 800-residue polypeptide: Protein MEI2-like 5 (800 aa).

RRM domains lie at 168–241 and 253–326; these read RTLF…FSIP and GTLV…PSRP. 2 positions are modified to phosphoserine: serine 384 and serine 390. Disordered regions lie at residues 470-489 and 776-800; these read GSPNARSEPSSSSVWSTSST and VVDEESKNMDLLDSQLSDDDGRERS. Residues 471–488 show a composition bias toward low complexity; that stretch reads SPNARSEPSSSSVWSTSS. Residues serine 789 and serine 792 each carry the phosphoserine modification.

In terms of biological role, probable RNA-binding protein that plays a role in meiosis and vegetative growth. The polypeptide is Protein MEI2-like 5 (ML5) (Arabidopsis thaliana (Mouse-ear cress)).